The following is a 406-amino-acid chain: RING finger protein PSH1 (406 aa).

Residues 30–72 (CSICHDYMFVPMMTPCGHNYCYGCLNTWFASNTQKELACPQCR) form an RING-type zinc finger. Residues Ser143 and Ser191 each carry the phosphoserine modification. A disordered region spans residues 209–406 (RFASTNPFAN…RVVLGDSDDE (198 aa)). Acidic residues-rich tracts occupy residues 223 to 232 (SSEDDDSSEE), 256 to 274 (AVDD…EEMD), and 281 to 291 (IEDDEDDEDED). Position 310 is a phosphothreonine (Thr310). Ser403 is subject to Phosphoserine.

In terms of assembly, interacts with POB3 and SPT16.

It is found in the nucleus. The polypeptide is RING finger protein PSH1 (PSH1) (Saccharomyces cerevisiae (strain ATCC 204508 / S288c) (Baker's yeast)).